Here is a 363-residue protein sequence, read N- to C-terminus: MKRVYNFSPGPAALPQEVIKQAAEEMTNWRGSGLSVMEMSHRGREFTEILATTKADLRSLLSIPDNYKILLMQGGAIAENAIVPMNLVGSKAQPATIDFVNTGHWSSKTIEEAHKYAKVNIAASSEDKDFTYVPARDTWKLTPDAAYVHICTNETIGGVEFDFTPDVGNVPLVADMSSNILSREIDISKYAVIYAGAQKNIGPAGVTIVIVRDDMLGHALPICPSAFDWKLVDEHDSMFNTPPTYPIYIAGLTFQWMLRQGGVAAMEQVNIAKAKLIYDYLDSTDFYVNSVPAANRSRMNVPFFLKDESLNGKFITEADAQGLVQLKGHSSVGGMRASIYNAMPIEGVQALVAFMKDFEKKYG.

Arg-42 provides a ligand contact to L-glutamate. 4 residues coordinate pyridoxal 5'-phosphate: Trp-105, Thr-155, Asp-175, and Gln-198. An N6-(pyridoxal phosphate)lysine modification is found at Lys-199. 240–241 (NT) serves as a coordination point for pyridoxal 5'-phosphate.

This sequence belongs to the class-V pyridoxal-phosphate-dependent aminotransferase family. SerC subfamily. As to quaternary structure, homodimer. Pyridoxal 5'-phosphate serves as cofactor.

The protein localises to the cytoplasm. The catalysed reaction is O-phospho-L-serine + 2-oxoglutarate = 3-phosphooxypyruvate + L-glutamate. It catalyses the reaction 4-(phosphooxy)-L-threonine + 2-oxoglutarate = (R)-3-hydroxy-2-oxo-4-phosphooxybutanoate + L-glutamate. The protein operates within amino-acid biosynthesis; L-serine biosynthesis; L-serine from 3-phospho-D-glycerate: step 2/3. It functions in the pathway cofactor biosynthesis; pyridoxine 5'-phosphate biosynthesis; pyridoxine 5'-phosphate from D-erythrose 4-phosphate: step 3/5. Its function is as follows. Catalyzes the reversible conversion of 3-phosphohydroxypyruvate to phosphoserine and of 3-hydroxy-2-oxo-4-phosphonooxybutanoate to phosphohydroxythreonine. The sequence is that of Phosphoserine aminotransferase from Janthinobacterium sp. (strain Marseille) (Minibacterium massiliensis).